Reading from the N-terminus, the 207-residue chain is Large ribosomal subunit protein uL4 (207 aa).

Positions 50–76 (KTKTVSEVSGTTKKPFKQKGTGNARQG) are disordered.

Belongs to the universal ribosomal protein uL4 family. In terms of assembly, part of the 50S ribosomal subunit.

Its function is as follows. One of the primary rRNA binding proteins, this protein initially binds near the 5'-end of the 23S rRNA. It is important during the early stages of 50S assembly. It makes multiple contacts with different domains of the 23S rRNA in the assembled 50S subunit and ribosome. Functionally, forms part of the polypeptide exit tunnel. The sequence is that of Large ribosomal subunit protein uL4 from Rickettsia typhi (strain ATCC VR-144 / Wilmington).